We begin with the raw amino-acid sequence, 167 residues long: Small ribosomal subunit protein uS5 (167 aa).

The 64-residue stretch at Leu-12–Val-75 folds into the S5 DRBM domain.

The protein belongs to the universal ribosomal protein uS5 family. In terms of assembly, part of the 30S ribosomal subunit. Contacts proteins S4 and S8.

Functionally, with S4 and S12 plays an important role in translational accuracy. Its function is as follows. Located at the back of the 30S subunit body where it stabilizes the conformation of the head with respect to the body. This chain is Small ribosomal subunit protein uS5, found in Shewanella denitrificans (strain OS217 / ATCC BAA-1090 / DSM 15013).